A 316-amino-acid chain; its full sequence is Protein YIPF2 (316 aa).

A2 carries the post-translational modification N-acetylalanine. The Cytoplasmic segment spans residues 2–124 (ASADELTFHE…LRNRPDLYGP (123 aa)). The disordered stretch occupies residues 16-37 (TNLLADTPDAATTSRSDQLTPQ). Positions 25-36 (AATTSRSDQLTP) are enriched in polar residues. Residues 125–145 (FWICATLAFVLAVTGNLTLVL) traverse the membrane as a helical segment. The Lumenal segment spans residues 146–163 (AQRRDPSIHYSPQFHKVT). A helical membrane pass occupies residues 164–184 (VAGISIYCYAWLVPLALWGFL). Over 185 to 196 (RWRKGVQERMGP) the chain is Cytoplasmic. The helical transmembrane segment at 197–219 (YTFLETVCIYGYSLFVFIPMVVL) threads the bilayer. Residues 220 to 231 (WLIPVPWLQWLF) are Lumenal-facing. Residues 232–252 (GALALGLSAAGLVFTLWPVVR) form a helical membrane-spanning segment. Residues 253–256 (EDTR) lie on the Cytoplasmic side of the membrane. The helical transmembrane segment at 257-277 (LVATVLLSVVVLLHALLAMGC) threads the bilayer. The Lumenal portion of the chain corresponds to 278 to 316 (KLYFFQSLPPENVAPPPQITSLPSNIALSPTLPQSLAPS).

The protein belongs to the YIP1 family. In terms of assembly, interacts with YIPF6; this interaction may stabilize YIPF2. May also form a ternary complex with YIPF1 and YIPF6.

The protein resides in the golgi apparatus. Its subcellular location is the cis-Golgi network membrane. It is found in the trans-Golgi network membrane. The protein localises to the late endosome membrane. The polypeptide is Protein YIPF2 (YIPF2) (Homo sapiens (Human)).